A 1070-amino-acid chain; its full sequence is DNA-directed RNA polymerase subunit beta (1070 aa).

Belongs to the RNA polymerase beta chain family. In terms of assembly, in plastids the minimal PEP RNA polymerase catalytic core is composed of four subunits: alpha, beta, beta', and beta''. When a (nuclear-encoded) sigma factor is associated with the core the holoenzyme is formed, which can initiate transcription.

Its subcellular location is the plastid. The protein localises to the chloroplast. It catalyses the reaction RNA(n) + a ribonucleoside 5'-triphosphate = RNA(n+1) + diphosphate. In terms of biological role, DNA-dependent RNA polymerase catalyzes the transcription of DNA into RNA using the four ribonucleoside triphosphates as substrates. The chain is DNA-directed RNA polymerase subunit beta from Nicotiana tomentosiformis (Tobacco).